Consider the following 140-residue polypeptide: Large ribosomal subunit protein bL17 (140 aa).

Belongs to the bacterial ribosomal protein bL17 family. As to quaternary structure, part of the 50S ribosomal subunit. Contacts protein L32.

The protein is Large ribosomal subunit protein bL17 of Rhizorhabdus wittichii (strain DSM 6014 / CCUG 31198 / JCM 15750 / NBRC 105917 / EY 4224 / RW1) (Sphingomonas wittichii).